Reading from the N-terminus, the 297-residue chain is Acetaldehyde dehydrogenase (297 aa).

Residue 18-21 (TGNI) coordinates NAD(+). The active-site Acyl-thioester intermediate is the Cys133. Residues 165-173 (SAGPATRLN) and Asn275 each bind NAD(+).

Belongs to the acetaldehyde dehydrogenase family.

The enzyme catalyses acetaldehyde + NAD(+) + CoA = acetyl-CoA + NADH + H(+). In Spirochaeta aurantia, this protein is Acetaldehyde dehydrogenase.